The primary structure comprises 468 residues: Dimethylamine methyltransferase MtbB1 (468 aa).

A non-standard amino acid (pyrrolysine) is located at residue O356.

This sequence belongs to the dimethylamine methyltransferase family.

The enzyme catalyses Co(I)-[dimethylamine-specific corrinoid protein] + dimethylamine + H(+) = methyl-Co(III)-[dimethylamine-specific corrinoid protein] + methylamine. Its pathway is one-carbon metabolism; methanogenesis from dimethylamine. Functionally, catalyzes the transfer of a methyl group from dimethylamine to the corrinoid cofactor of MtbC. The sequence is that of Dimethylamine methyltransferase MtbB1 (mtbB1) from Methanosarcina mazei (strain ATCC BAA-159 / DSM 3647 / Goe1 / Go1 / JCM 11833 / OCM 88) (Methanosarcina frisia).